An 847-amino-acid polypeptide reads, in one-letter code: MNINEWEKFSLFQWQECPSIKILHDSVGNKISCIGKSTKRIAIGTLDGRIVILNSRLQLIRDFYACEQGIVQQIYITADQSALCCVVLDKQNFVYLQFWSLNPSKKTNSNSPLCLYEHRLYGIPNPPFPATSLYVSIDIKTVVCGFANGLVIRVEGDFVRDLGSRQDIILREKDSITNLILYSPKKLFVSTTTQVMVYKIKNNTKKVISNHGIPLFCSIQYQGKYIMCAGGSFLSVYTTPDMQLQNTYCVDGTFELLFSSFGLVFVVYTRKNGENGLENNSSIREIKALDVEKRYVLYESLLEQSYDNIFFNSFDCIFFSSTKVPCQLIRLPSDFVLCKMKGKKEHKDAFKIANYLGSPEDTIRECALAAAGECRQQLNFQDATYYYIEAIPFSDSAEIIKFYLEKKLIKELTSYLEALSAKGFAFSHEISTLIYLYIKLRKLDKLTEYVSGCPTEISLPILRKYKCLDQMELLGTIRKLPNVCMEVYQEKGDVEKAFNHLQVCNLPELLRTSNSFGIWLFNSDPMRFMKEAIRNIEILNSQGKDKELSNILKIVYLGIFSQNVQIQLIFLDELLKSKKSENVLKFIYTRKLYALMQKELQHSNPQNELDALQIIHDSQGLLDYESSILCLQAVSWKQVTDLLYSHLSLKEGQDDSLIQQIISDPETVKTLSETYSSEDALHVLKFFVRERSITNKYEDILYKILEACFMQFRIPIQHVLNILVKDGTLNFCFLKPLLLKWMNDYETRIHQNDDEIQVIKNDIEKKRQLLGTIQDSEKVCDNCEGLLDVPFVSYSCLHLVHRDCATETVCPKCKAGYLDKKNSHDQKKTSTFSELFHDFESIDSVML.

The CHCR repeat unit spans residues 387 to 526 (YIEAIPFSDS…GIWLFNSDPM (140 aa)). An RING-type; atypical zinc finger spans residues 780-814 (CDNCEGLLDVPFVSYSCLHLVHRDCATETVCPKCK).

It localises to the cytoplasm. Its subcellular location is the nucleus. In Schizosaccharomyces pombe (strain 972 / ATCC 24843) (Fission yeast), this protein is Pep5-like zinc finger protein C16A10.03c.